The primary structure comprises 76 residues: Small ribosomal subunit protein bS18 (76 aa).

The protein belongs to the bacterial ribosomal protein bS18 family. As to quaternary structure, part of the 30S ribosomal subunit. Forms a tight heterodimer with protein bS6.

Its function is as follows. Binds as a heterodimer with protein bS6 to the central domain of the 16S rRNA, where it helps stabilize the platform of the 30S subunit. This is Small ribosomal subunit protein bS18 from Brevibacillus brevis (strain 47 / JCM 6285 / NBRC 100599).